The following is a 265-amino-acid chain: 6-oxopurine nucleoside phosphorylase (265 aa).

Phosphate-binding positions include Ser-10, Arg-49 to His-50, and Ser-82 to Ala-83. Cystine bridges form between Cys-136-Cys-202 and Cys-162-Cys-190. Met-187 is a substrate binding site. Phosphate is bound at residue Thr-188. Asn-211–Ala-213 contributes to the substrate binding site. A disulfide bridge connects residues Cys-254 and Cys-256.

The protein belongs to the PNP/MTAP phosphorylase family. MTAP subfamily. Homohexamer. Dimer of a homotrimer.

The catalysed reaction is a purine D-ribonucleoside + phosphate = a purine nucleobase + alpha-D-ribose 1-phosphate. The enzyme catalyses guanosine + phosphate = alpha-D-ribose 1-phosphate + guanine. It catalyses the reaction inosine + phosphate = alpha-D-ribose 1-phosphate + hypoxanthine. It functions in the pathway purine metabolism; purine nucleoside salvage. Purine nucleoside phosphorylase which is highly specific for 6-oxopurine nucleosides. Cleaves guanosine or inosine to respective bases and sugar-1-phosphate molecules. Involved in purine salvage. The protein is 6-oxopurine nucleoside phosphorylase of Pyrococcus furiosus (strain ATCC 43587 / DSM 3638 / JCM 8422 / Vc1).